Here is a 382-residue protein sequence, read N- to C-terminus: Carbamoyl phosphate synthase small chain (382 aa).

A CPSase region spans residues 1-189; the sequence is MIKSALLVLE…GLPEAKKEDE (189 aa). Residues serine 47, glycine 241, and glycine 243 each coordinate L-glutamine. Residues 193-380 enclose the Glutamine amidotransferase type-1 domain; sequence HVVAYDFGAK…IELIEQYRKT (188 aa). The active-site Nucleophile is the cysteine 269. L-glutamine-binding residues include leucine 270, glutamine 273, asparagine 311, glycine 313, and phenylalanine 314. Catalysis depends on residues histidine 353 and glutamate 355.

The protein belongs to the CarA family. In terms of assembly, composed of two chains; the small (or glutamine) chain promotes the hydrolysis of glutamine to ammonia, which is used by the large (or ammonia) chain to synthesize carbamoyl phosphate. Tetramer of heterodimers (alpha,beta)4.

It catalyses the reaction hydrogencarbonate + L-glutamine + 2 ATP + H2O = carbamoyl phosphate + L-glutamate + 2 ADP + phosphate + 2 H(+). The catalysed reaction is L-glutamine + H2O = L-glutamate + NH4(+). Its pathway is amino-acid biosynthesis; L-arginine biosynthesis; carbamoyl phosphate from bicarbonate: step 1/1. It participates in pyrimidine metabolism; UMP biosynthesis via de novo pathway; (S)-dihydroorotate from bicarbonate: step 1/3. Functionally, small subunit of the glutamine-dependent carbamoyl phosphate synthetase (CPSase). CPSase catalyzes the formation of carbamoyl phosphate from the ammonia moiety of glutamine, carbonate, and phosphate donated by ATP, constituting the first step of 2 biosynthetic pathways, one leading to arginine and/or urea and the other to pyrimidine nucleotides. The small subunit (glutamine amidotransferase) binds and cleaves glutamine to supply the large subunit with the substrate ammonia. The polypeptide is Carbamoyl phosphate synthase small chain (Escherichia coli O157:H7).